Consider the following 261-residue polypeptide: Thiazole synthase (261 aa).

Lysine 95 acts as the Schiff-base intermediate with DXP in catalysis. Residues glycine 156, 182–183, and 204–205 contribute to the 1-deoxy-D-xylulose 5-phosphate site; these read AG and NT.

This sequence belongs to the ThiG family. Homotetramer. Forms heterodimers with either ThiH or ThiS.

Its subcellular location is the cytoplasm. It carries out the reaction [ThiS sulfur-carrier protein]-C-terminal-Gly-aminoethanethioate + 2-iminoacetate + 1-deoxy-D-xylulose 5-phosphate = [ThiS sulfur-carrier protein]-C-terminal Gly-Gly + 2-[(2R,5Z)-2-carboxy-4-methylthiazol-5(2H)-ylidene]ethyl phosphate + 2 H2O + H(+). It participates in cofactor biosynthesis; thiamine diphosphate biosynthesis. Catalyzes the rearrangement of 1-deoxy-D-xylulose 5-phosphate (DXP) to produce the thiazole phosphate moiety of thiamine. Sulfur is provided by the thiocarboxylate moiety of the carrier protein ThiS. In vitro, sulfur can be provided by H(2)S. The sequence is that of Thiazole synthase from Pectobacterium atrosepticum (strain SCRI 1043 / ATCC BAA-672) (Erwinia carotovora subsp. atroseptica).